Here is a 122-residue protein sequence, read N- to C-terminus: UPF0102 protein Cgl2031/cg2228 (122 aa).

Belongs to the UPF0102 family.

This chain is UPF0102 protein Cgl2031/cg2228, found in Corynebacterium glutamicum (strain ATCC 13032 / DSM 20300 / JCM 1318 / BCRC 11384 / CCUG 27702 / LMG 3730 / NBRC 12168 / NCIMB 10025 / NRRL B-2784 / 534).